Reading from the N-terminus, the 635-residue chain is MAKKSAENGIYSVSGDEKKGPLIVSGPDGAPAKGDGPAGLGAPGGRLAVPPRETWTRQMDFIMSCVGFAVGLGNVWRFPYLCYKNGGGVFLIPYVLIALVGGIPIFFLEISLGQFMKAGSINVWNICPLFKGLGYASMVIVFYCNTYYIMVLAWGFYYLVKSFTTTLPWATCGHTWNTPDCVEIFRHEDCANASLANLTCDQLADRRSPVIEFWENKVLRLSTGLEVPGALNWEVTLCLLACWVLVYFCVWKGVKSTGKIVYFTATFPYVVLVVLLVRGVLLPGALDGIIYYLKPDWSKLGSPQVWIDAGTQIFFSYAIGLGALTALGSYNRFNNNCYKDAIILALINSGTSFFAGFVVFSILGFMATEQGVHISKVAESGPGLAFIAYPRAVTLMPVAPLWAALFFFMLLLLGLDSQFVGVEGFITGLLDLLPASYYFRFQREISVALCCALCFVIDLSMVTDGGMYVFQLFDYYSASGTTLLWQAFWECVVVAWVYGADRFMDDIACMIGYRPCPWMKWCWSFFTPLVCMGIFIFNIVYYEPLVYNNTYVYPWWGEAMGWAFALSSMLCVPLHLLGCLLRAKGTMAERWQHLTQPIWGLHHLEYRAQDADVRGLTTLTPVSESSKVVVVESVM.

A disordered region spans residues 1–27 (MAKKSAENGIYSVSGDEKKGPLIVSGP). The Cytoplasmic portion of the chain corresponds to 1–60 (MAKKSAENGIYSVSGDEKKGPLIVSGPDGAPAKGDGPAGLGAPGGRLAVPPRETWTRQMD). A helical transmembrane segment spans residues 61–81 (FIMSCVGFAVGLGNVWRFPYL). Topologically, residues 82–87 (CYKNGG) are extracellular. The chain crosses the membrane as a helical span at residues 88 to 108 (GVFLIPYVLIALVGGIPIFFL). Residues 109-138 (EISLGQFMKAGSINVWNICPLFKGLGYASM) are Cytoplasmic-facing. The chain crosses the membrane as a helical span at residues 139 to 159 (VIVFYCNTYYIMVLAWGFYYL). Over 160 to 230 (VKSFTTTLPW…LSTGLEVPGA (71 aa)) the chain is Extracellular. N-linked (GlcNAc...) asparagine glycosylation is found at Asn192 and Asn197. A helical membrane pass occupies residues 231-251 (LNWEVTLCLLACWVLVYFCVW). At 252 to 269 (KGVKSTGKIVYFTATFPY) the chain is on the cytoplasmic side. Residues 270–290 (VVLVVLLVRGVLLPGALDGII) form a helical membrane-spanning segment. Topologically, residues 291–304 (YYLKPDWSKLGSPQ) are extracellular. Residues 305 to 325 (VWIDAGTQIFFSYAIGLGALT) traverse the membrane as a helical segment. The Cytoplasmic portion of the chain corresponds to 326–341 (ALGSYNRFNNNCYKDA). A helical transmembrane segment spans residues 342 to 362 (IILALINSGTSFFAGFVVFSI). Residues 363–394 (LGFMATEQGVHISKVAESGPGLAFIAYPRAVT) are Extracellular-facing. The helical transmembrane segment at 395–415 (LMPVAPLWAALFFFMLLLLGL) threads the bilayer. Residues 416-444 (DSQFVGVEGFITGLLDLLPASYYFRFQRE) are Cytoplasmic-facing. The helical transmembrane segment at 445-465 (ISVALCCALCFVIDLSMVTDG) threads the bilayer. Topologically, residues 466–479 (GMYVFQLFDYYSAS) are extracellular. The chain crosses the membrane as a helical span at residues 480-500 (GTTLLWQAFWECVVVAWVYGA). The Cytoplasmic portion of the chain corresponds to 501–520 (DRFMDDIACMIGYRPCPWMK). A helical membrane pass occupies residues 521-541 (WCWSFFTPLVCMGIFIFNIVY). The Extracellular segment spans residues 542–560 (YEPLVYNNTYVYPWWGEAM). N-linked (GlcNAc...) asparagine glycosylation is present at Asn548. The helical transmembrane segment at 561–581 (GWAFALSSMLCVPLHLLGCLL) threads the bilayer. Residues 582–635 (RAKGTMAERWQHLTQPIWGLHHLEYRAQDADVRGLTTLTPVSESSKVVVVESVM) are Cytoplasmic-facing. 2 positions are modified to phosphothreonine: Thr617 and Thr620. Ser623 bears the Phosphoserine mark.

The protein belongs to the sodium:neurotransmitter symporter (SNF) (TC 2.A.22) family. SLC6A8 subfamily. In terms of processing, glycosylated. Brain. Highly expressed in brain capillaries branching in all cortical layers and moderately expressed in neuronal perikarya (at protein level).

It localises to the cell membrane. The protein resides in the apical cell membrane. The catalysed reaction is creatine(out) + chloride(out) + 2 Na(+)(out) = creatine(in) + chloride(in) + 2 Na(+)(in). Its function is as follows. Creatine:sodium symporter which mediates the uptake of creatine. Plays an important role in supplying creatine to the brain via the blood-brain barrier. In Mus musculus (Mouse), this protein is Sodium- and chloride-dependent creatine transporter 1 (Slc6a8).